The following is a 473-amino-acid chain: Bifunctional protein HldE (473 aa).

Residues 1-317 form a ribokinase region; it reads MTHGLPHFTS…LQQALHPRAI (317 aa). Residue 195-198 coordinates ATP; sequence NLAE. Aspartate 264 is a catalytic residue. A cytidylyltransferase region spans residues 343–473; sequence MTNGCFDILH…SQIIDIIRKN (131 aa).

The protein in the N-terminal section; belongs to the carbohydrate kinase PfkB family. This sequence in the C-terminal section; belongs to the cytidylyltransferase family. In terms of assembly, homodimer.

The catalysed reaction is D-glycero-beta-D-manno-heptose 7-phosphate + ATP = D-glycero-beta-D-manno-heptose 1,7-bisphosphate + ADP + H(+). It catalyses the reaction D-glycero-beta-D-manno-heptose 1-phosphate + ATP + H(+) = ADP-D-glycero-beta-D-manno-heptose + diphosphate. It participates in nucleotide-sugar biosynthesis; ADP-L-glycero-beta-D-manno-heptose biosynthesis; ADP-L-glycero-beta-D-manno-heptose from D-glycero-beta-D-manno-heptose 7-phosphate: step 1/4. It functions in the pathway nucleotide-sugar biosynthesis; ADP-L-glycero-beta-D-manno-heptose biosynthesis; ADP-L-glycero-beta-D-manno-heptose from D-glycero-beta-D-manno-heptose 7-phosphate: step 3/4. Catalyzes the phosphorylation of D-glycero-D-manno-heptose 7-phosphate at the C-1 position to selectively form D-glycero-beta-D-manno-heptose-1,7-bisphosphate. In terms of biological role, catalyzes the ADP transfer from ATP to D-glycero-beta-D-manno-heptose 1-phosphate, yielding ADP-D-glycero-beta-D-manno-heptose. The protein is Bifunctional protein HldE of Nitrosococcus oceani (strain ATCC 19707 / BCRC 17464 / JCM 30415 / NCIMB 11848 / C-107).